The chain runs to 228 residues: DNA-binding response regulator MtrA (228 aa).

The Response regulatory domain maps to Arg-7–Leu-120. A 4-aspartylphosphate modification is found at Asp-56. A DNA-binding region (ompR/PhoB-type) is located at residues Ala-128–Pro-227.

As to quaternary structure, probably a monomer when inactive, phosphorylation may permit it to oligomerize. The monomeric form does not seem to be phosphorylated. Phosphorylated by MtrB.

It is found in the cytoplasm. Member of the two-component regulatory system MtrA/MtrB, responding to environmental signals. Controls expression of a number of genes including dnaA, ripA, fbpB and probably itself. Probably plays a role in cell division. The sequence is that of DNA-binding response regulator MtrA (mtrA) from Mycolicibacterium smegmatis (strain ATCC 700084 / mc(2)155) (Mycobacterium smegmatis).